The following is a 337-amino-acid chain: Ornithine carbamoyltransferase (337 aa).

Carbamoyl phosphate is bound by residues 57-60 (STRT), Q84, R108, and 135-138 (HPTQ). L-ornithine contacts are provided by residues N167, D231, and 235–236 (SM). Carbamoyl phosphate-binding positions include 272–273 (CL) and R317.

It belongs to the aspartate/ornithine carbamoyltransferase superfamily. OTCase family.

It is found in the cytoplasm. The enzyme catalyses carbamoyl phosphate + L-ornithine = L-citrulline + phosphate + H(+). It functions in the pathway amino-acid degradation; L-arginine degradation via ADI pathway; carbamoyl phosphate from L-arginine: step 2/2. In terms of biological role, reversibly catalyzes the transfer of the carbamoyl group from carbamoyl phosphate (CP) to the N(epsilon) atom of ornithine (ORN) to produce L-citrulline. The protein is Ornithine carbamoyltransferase of Streptococcus uberis (strain ATCC BAA-854 / 0140J).